The sequence spans 243 residues: Small ribosomal subunit protein uS3 (243 aa).

A KH type-2 domain is found at 39–107; sequence MRKFVMSELK…ETHLNIVEVR (69 aa). The tract at residues 214–243 is disordered; sequence ASERRAMEGDAQGPASRDRDRDRDRRRDNA. Residues 229-243 show a composition bias toward basic and acidic residues; that stretch reads SRDRDRDRDRRRDNA.

It belongs to the universal ribosomal protein uS3 family. As to quaternary structure, part of the 30S ribosomal subunit. Forms a tight complex with proteins S10 and S14.

Functionally, binds the lower part of the 30S subunit head. Binds mRNA in the 70S ribosome, positioning it for translation. The sequence is that of Small ribosomal subunit protein uS3 from Rhizobium leguminosarum bv. trifolii (strain WSM2304).